We begin with the raw amino-acid sequence, 518 residues long: Beta-TrCP (518 aa).

Over residues 1–12 (MEGFSCSLQPPT) the composition is skewed to polar residues. The tract at residues 1–24 (MEGFSCSLQPPTASEREDCNRDEP) is disordered. Residues 14 to 24 (SEREDCNRDEP) are compositionally biased toward basic and acidic residues. Residues 119 to 157 (DHIAENILSYLDAKSLCSAELVCKEWYRVTSDGMLWKKL) enclose the F-box domain. WD repeat units follow at residues 230 to 258 (ETSKGVYCLQYDDQKIVSGLRDNTIKIWD), 270 to 298 (GHTGSVLCLQYDERVIITGSSDSTVRVWD), 310 to 338 (HHCEAVLHLRFNNGMMVTCSKDRSIAVWD), 353 to 381 (GHRAAVNVVDFDDKYIVSASGDRTIKVWN), 393 to 421 (GHKRGIACLQYRDRLVVSGSSDNTIRLWD), 433 to 461 (GHEELVRCIRFDNKRIVSGAYDGKIKVWD), and 482 to 510 (EHSGRVFRLQFDEFQIVSSSHDDTILIWD).

Part of a SCF (SKP1-cullin-F-box) ubiquitin-protein ligase complex. Interacts with fbxo5.

Functionally, substrate recognition component of a SCF (SKP1-CUL1-F-box protein) E3 ubiquitin-protein ligase complex which mediates the ubiquitination and subsequent proteasomal degradation of target proteins. Probably recognizes and binds to phosphorylated target proteins. May participate in Wnt signaling. This is Beta-TrCP (fbxw1) from Xenopus laevis (African clawed frog).